We begin with the raw amino-acid sequence, 668 residues long: Transketolase (668 aa).

Residue His-28 participates in substrate binding. Residues His-68 and 116 to 118 (GPL) each bind thiamine diphosphate. A Mg(2+)-binding site is contributed by Asp-157. Residues Gly-158 and Asn-187 each contribute to the thiamine diphosphate site. Mg(2+) is bound by residues Asn-187 and Ile-189. Residues His-263, Arg-358, and Ser-385 each contribute to the substrate site. Position 263 (His-263) interacts with thiamine diphosphate. The active-site Proton donor is the Glu-412. Position 438 (Phe-438) interacts with thiamine diphosphate. 4 residues coordinate substrate: His-462, Asp-470, His-474, and Arg-521.

It belongs to the transketolase family. In terms of assembly, homodimer. The cofactor is Mg(2+). Thiamine diphosphate serves as cofactor.

It catalyses the reaction D-sedoheptulose 7-phosphate + D-glyceraldehyde 3-phosphate = aldehydo-D-ribose 5-phosphate + D-xylulose 5-phosphate. Functionally, catalyzes the transfer of a two-carbon ketol group from a ketose donor to an aldose acceptor, likely via a covalent intermediate with the cofactor thiamine pyrophosphate. Can use L-erythrulose as donor and D-ribose-5-phosphate as acceptor substrates, forming glycolaldehyde and D-sedoheptulose-7-phosphate. For synthetic purposes, is able to use hydroxypyruvate (HPA) as donor substrate, making the reaction irreversible due to the release of carbon dioxide, and various aldehydes as acceptor substrates, which leads to the corresponding ketoses. Thus, using hydroxypyruvate as donor and three different aldehydes as acceptors, i.e. glycolaldehyde, D-glyceraldehyde and butyraldehyde, the enzyme stereoselectively forms the corresponding products L-erythrulose, D-xylulose and (3S)-1,3-dihydroxyhexan-2-one, respectively. This Geobacillus stearothermophilus (Bacillus stearothermophilus) protein is Transketolase.